A 303-amino-acid polypeptide reads, in one-letter code: Recombination-associated protein RdgC (303 aa).

The protein belongs to the RdgC family.

It is found in the cytoplasm. Its subcellular location is the nucleoid. Functionally, may be involved in recombination. The sequence is that of Recombination-associated protein RdgC from Shewanella piezotolerans (strain WP3 / JCM 13877).